A 321-amino-acid chain; its full sequence is Lipoyl synthase (321 aa).

Cysteine 68, cysteine 73, cysteine 79, cysteine 94, cysteine 98, cysteine 101, and serine 308 together coordinate [4Fe-4S] cluster. One can recognise a Radical SAM core domain in the interval 80–297 (FNHGTATFMI…KALADELGFT (218 aa)).

It belongs to the radical SAM superfamily. Lipoyl synthase family. [4Fe-4S] cluster serves as cofactor.

Its subcellular location is the cytoplasm. It catalyses the reaction [[Fe-S] cluster scaffold protein carrying a second [4Fe-4S](2+) cluster] + N(6)-octanoyl-L-lysyl-[protein] + 2 oxidized [2Fe-2S]-[ferredoxin] + 2 S-adenosyl-L-methionine + 4 H(+) = [[Fe-S] cluster scaffold protein] + N(6)-[(R)-dihydrolipoyl]-L-lysyl-[protein] + 4 Fe(3+) + 2 hydrogen sulfide + 2 5'-deoxyadenosine + 2 L-methionine + 2 reduced [2Fe-2S]-[ferredoxin]. The protein operates within protein modification; protein lipoylation via endogenous pathway; protein N(6)-(lipoyl)lysine from octanoyl-[acyl-carrier-protein]: step 2/2. Its function is as follows. Catalyzes the radical-mediated insertion of two sulfur atoms into the C-6 and C-8 positions of the octanoyl moiety bound to the lipoyl domains of lipoate-dependent enzymes, thereby converting the octanoylated domains into lipoylated derivatives. In Shewanella oneidensis (strain ATCC 700550 / JCM 31522 / CIP 106686 / LMG 19005 / NCIMB 14063 / MR-1), this protein is Lipoyl synthase.